The sequence spans 289 residues: Bis(5'-nucleosyl)-tetraphosphatase, symmetrical (289 aa).

It belongs to the Ap4A hydrolase family.

The catalysed reaction is P(1),P(4)-bis(5'-adenosyl) tetraphosphate + H2O = 2 ADP + 2 H(+). Hydrolyzes diadenosine 5',5'''-P1,P4-tetraphosphate to yield ADP. In Yersinia pseudotuberculosis serotype O:3 (strain YPIII), this protein is Bis(5'-nucleosyl)-tetraphosphatase, symmetrical.